A 973-amino-acid chain; its full sequence is EF-hand calcium-binding domain-containing protein 13 (973 aa).

The segment at 384-448 (YSKNGINFKK…HSSLQKQVSS (65 aa)) is disordered. The segment covering 396–405 (EKGEIHDSKS) has biased composition (basic and acidic residues). The span at 406–418 (KPQSLKSSTSLSK) shows a compositional bias: low complexity. 6 consecutive EF-hand domains span residues 488–523 (LLDEEFQKIVTDTSRNENGMVELDDFVNALAKERSF), 524–559 (PECNALPGVIKAIDKIKDKNVDYEDLNTCLQNFGIY), 633–668 (LKKDEFLAALELVTVDEGDKVQFEEFAKVVRNMRDA), 756–791 (PKVNEIKEAANILSHVDNGKIGIPDLEHALKCLNVN), 792–827 (LTEEDFNEALNCCNVSDNMEVDLKDFLMKMKESPHF), and 864–899 (TANAILTVMLRHVPEHESGKVSIQEFMTKLSDILTI).

This is EF-hand calcium-binding domain-containing protein 13 (EFCAB13) from Homo sapiens (Human).